Reading from the N-terminus, the 145-residue chain is MKGLLQRVRNARVEVGGEVVGAIDQGILVLVGIEPQDTRASADKLLHKLLNYRVFSDADGKMNLSLREVGGGLLLVSQFTLAADTKSGLRAGFSKAAAPALGAELFDYLLSQARIAHTAVAAGQFGADMQVHLINDGPVTFLFDT.

The Gly-cisPro motif, important for rejection of L-amino acids motif lies at Gly-137–Pro-138.

Belongs to the DTD family. As to quaternary structure, homodimer.

It localises to the cytoplasm. The catalysed reaction is glycyl-tRNA(Ala) + H2O = tRNA(Ala) + glycine + H(+). It catalyses the reaction a D-aminoacyl-tRNA + H2O = a tRNA + a D-alpha-amino acid + H(+). An aminoacyl-tRNA editing enzyme that deacylates mischarged D-aminoacyl-tRNAs. Also deacylates mischarged glycyl-tRNA(Ala), protecting cells against glycine mischarging by AlaRS. Acts via tRNA-based rather than protein-based catalysis; rejects L-amino acids rather than detecting D-amino acids in the active site. By recycling D-aminoacyl-tRNA to D-amino acids and free tRNA molecules, this enzyme counteracts the toxicity associated with the formation of D-aminoacyl-tRNA entities in vivo and helps enforce protein L-homochirality. The polypeptide is D-aminoacyl-tRNA deacylase (Pseudomonas savastanoi pv. phaseolicola (strain 1448A / Race 6) (Pseudomonas syringae pv. phaseolicola (strain 1448A / Race 6))).